The sequence spans 979 residues: Pro-apoptotic serine protease NMA111 (979 aa).

Residues 1–20 (MTIMNEGKKRSHSSSSDDHL) form a disordered region. Residues 65-255 (VVSIHFAQVA…LPLDRILRAL (191 aa)) are serine protease. Active-site charge relay system residues include His-103, Asp-134, and Ser-217. 2 PDZ domains span residues 273–361 (WLLK…RGGT) and 750–836 (SILH…VRDG).

It belongs to the peptidase S1C family.

The protein localises to the nucleus. Functionally, nuclear serine protease which mediates apoptosis. The chain is Pro-apoptotic serine protease NMA111 (NMA111) from Candida glabrata (strain ATCC 2001 / BCRC 20586 / JCM 3761 / NBRC 0622 / NRRL Y-65 / CBS 138) (Yeast).